The sequence spans 1091 residues: E3 ubiquitin-protein ligase TRIM33 (1091 aa).

Over residues 1–13 the composition is skewed to gly residues; it reads MADNKGGGGGGGE. The tract at residues 1-87 is disordered; sequence MADNKGGGGG…SATPASSSSS (87 aa). The span at 52–87 shows a compositional bias: low complexity; that stretch reads APVAAVPTDTPAEENPAPSSSSVASSSATPASSSSS. The RING-type 1 zinc finger occupies 97 to 154; it reads CAVCKLSLQSRDTEPKLLPCLHSFCRRCLPEPERQLSVPGGTNGDIQQVGVIRCLVCR. Residues 180 to 227 form a B box-type 1; atypical zinc finger; sequence KSEQVCTSCEDNASAVGFCVECGEWLCKTCIEAHQRVKFTKDHIITNK. The Zn(2+) site is built by Cys185, Cys188, Cys209, His213, Cys245, His248, Cys268, and His273. Residues 240-281 form a B box-type 2 zinc finger; that stretch reads QRPVFCPVHKQEQLKLFCETCDRLTCRDCQLLEHKEHRYQFL. The stretch at 269-361 forms a coiled coil; that stretch reads QLLEHKEHRY…QLESVTKERQ (93 aa). Disordered regions lie at residues 672–779 and 821–844; these read LPQP…TPPL and GKSAVRNSMHRPPRGGGGGDGSNK. Over residues 675–721 the composition is skewed to low complexity; the sequence is PTSNMNPSPAPSAMSPGSTGLSNSHTPVRPPSTSSTGSRGSCGSSSR. Over residues 754–763 the composition is skewed to basic and acidic residues; that stretch reads KQEKAEDGRR. The segment covering 768-779 has biased composition (low complexity); sequence LSSPESSLTPPL. The segment at 850-897 adopts a PHD-type zinc-finger fold; that stretch reads EDWCAVCQNGGDLLCCEKCPKVFHLTCHVPTLLSFPSGEWICTFCRDL. The Bromo domain maps to 920 to 1043; that stretch reads GLSPVDQMKC…LYFEEKLPAI (124 aa). The disordered stretch occupies residues 1051-1091; it reads PLPEFEAEDDDGDVTDDSDDDDFVQPRRKRLKSEERPVHIK. Residues 1055-1073 show a composition bias toward acidic residues; that stretch reads FEAEDDDGDVTDDSDDDDF. Residues 1082-1091 are compositionally biased toward basic and acidic residues; the sequence is KSEERPVHIK.

May interact with smad4.

It is found in the nucleus. It carries out the reaction S-ubiquitinyl-[E2 ubiquitin-conjugating enzyme]-L-cysteine + [acceptor protein]-L-lysine = [E2 ubiquitin-conjugating enzyme]-L-cysteine + N(6)-ubiquitinyl-[acceptor protein]-L-lysine.. Its pathway is protein modification; protein ubiquitination. Acts as an E3 ubiquitin-protein ligase for smad4. Promotes ectoderm embryonic development at the expense of other germ layers. Inhibits mesodermal differentiation. Promotes neural development of the ectoderm. Promotes smad4 alpha degradation via the ubiquitin proteasome pathway. May act as a transcriptional repressor. This is E3 ubiquitin-protein ligase TRIM33 (trim33) from Xenopus laevis (African clawed frog).